We begin with the raw amino-acid sequence, 380 residues long: 1-deoxy-D-xylulose 5-phosphate reductoisomerase 2 (380 aa).

NADPH contacts are provided by Ser10, Gly11, Ser12, Ile13, Gly36, Lys37, Asn38, and Asn120. 1-deoxy-D-xylulose 5-phosphate is bound at residue Lys121. Glu122 is a binding site for NADPH. Asp146 lines the Mn(2+) pocket. 1-deoxy-D-xylulose 5-phosphate contacts are provided by Ser147, Glu148, Ser172, and His195. Glu148 contacts Mn(2+). Gly201 lines the NADPH pocket. Residues Ser208, Asn213, Lys214, and Glu217 each coordinate 1-deoxy-D-xylulose 5-phosphate. Glu217 serves as a coordination point for Mn(2+).

This sequence belongs to the DXR family. Mg(2+) serves as cofactor. Mn(2+) is required as a cofactor.

The catalysed reaction is 2-C-methyl-D-erythritol 4-phosphate + NADP(+) = 1-deoxy-D-xylulose 5-phosphate + NADPH + H(+). Its pathway is isoprenoid biosynthesis; isopentenyl diphosphate biosynthesis via DXP pathway; isopentenyl diphosphate from 1-deoxy-D-xylulose 5-phosphate: step 1/6. In terms of biological role, catalyzes the NADPH-dependent rearrangement and reduction of 1-deoxy-D-xylulose-5-phosphate (DXP) to 2-C-methyl-D-erythritol 4-phosphate (MEP). This Bacillus thuringiensis subsp. konkukian (strain 97-27) protein is 1-deoxy-D-xylulose 5-phosphate reductoisomerase 2.